The primary structure comprises 61 residues: Insect toxin BsIT2 (61 aa).

One can recognise an LCN-type CS-alpha/beta domain in the interval Asp-1 to Lys-61. Disulfide bonds link Cys-10–Cys-60, Cys-14–Cys-35, Cys-21–Cys-42, and Cys-25–Cys-44.

Belongs to the long (4 C-C) scorpion toxin superfamily. Sodium channel inhibitor family. Beta subfamily. In terms of tissue distribution, expressed by the venom gland.

Its subcellular location is the secreted. Its function is as follows. Depressant insect beta-toxins cause a transient contraction paralysis followed by a slow flaccid paralysis. They bind voltage-independently at site-4 of sodium channels (Nav) and shift the voltage of activation toward more negative potentials thereby affecting sodium channel activation and promoting spontaneous and repetitive firing. This toxin is active only on insects. This is Insect toxin BsIT2 from Hottentotta tamulus sindicus (Scorpion).